Consider the following 404-residue polypeptide: Nicotinate phosphoribosyltransferase (404 aa).

Residue H224 is modified to Phosphohistidine; by autocatalysis.

This sequence belongs to the NAPRTase family. In terms of processing, transiently phosphorylated on a His residue during the reaction cycle. Phosphorylation strongly increases the affinity for substrates and increases the rate of nicotinate D-ribonucleotide production. Dephosphorylation regenerates the low-affinity form of the enzyme, leading to product release.

The catalysed reaction is nicotinate + 5-phospho-alpha-D-ribose 1-diphosphate + ATP + H2O = nicotinate beta-D-ribonucleotide + ADP + phosphate + diphosphate. Its pathway is cofactor biosynthesis; NAD(+) biosynthesis; nicotinate D-ribonucleotide from nicotinate: step 1/1. Catalyzes the synthesis of beta-nicotinate D-ribonucleotide from nicotinate and 5-phospho-D-ribose 1-phosphate at the expense of ATP. The chain is Nicotinate phosphoribosyltransferase from Photorhabdus laumondii subsp. laumondii (strain DSM 15139 / CIP 105565 / TT01) (Photorhabdus luminescens subsp. laumondii).